The sequence spans 979 residues: Putative cellulose synthase-like protein D6 (979 aa).

The interval 1–24 (MMDGESPLRHPRISHVSNSGSDFG) is disordered. Over residues 14–24 (SHVSNSGSDFG) the composition is skewed to low complexity. Transmembrane regions (helical) follow at residues 116 to 136 (IIIALYRILIVVRVVSLALFL) and 147 to 167 (ALWLWLLSVICELWFAFSWLL). Active-site residues include aspartate 247 and aspartate 683. 6 helical membrane passes run 765–785 (IFILTYCFLPPLSLFSGHFVV), 788–808 (LTGSFLIYLLIITLSLCGLAV), 837–857 (LVAVLQGILKVIAGVEISFTL), 882–902 (ALMIPPLTIIILNIVAILFAV), 913–933 (WSNLLGGTFFASWVLLHMYPF), and 946–966 (TVVYVWSGLIAICLSLLYITI).

The protein belongs to the glycosyltransferase 2 family. Plant cellulose synthase-like D subfamily.

Its subcellular location is the golgi apparatus membrane. Functionally, thought to be a Golgi-localized beta-glycan synthase that polymerize the backbones of noncellulosic polysaccharides (hemicelluloses) of plant cell wall. The protein is Putative cellulose synthase-like protein D6 (CSLD6) of Arabidopsis thaliana (Mouse-ear cress).